The following is a 357-amino-acid chain: DNA replication and repair protein RecF (357 aa).

Residue glycine 31–threonine 38 coordinates ATP.

It belongs to the RecF family.

The protein resides in the cytoplasm. Its function is as follows. The RecF protein is involved in DNA metabolism; it is required for DNA replication and normal SOS inducibility. RecF binds preferentially to single-stranded, linear DNA. It also seems to bind ATP. This chain is DNA replication and repair protein RecF, found in Coxiella burnetii (strain Dugway 5J108-111).